The primary structure comprises 274 residues: Penicillin-insensitive murein endopeptidase (274 aa).

An N-terminal signal peptide occupies residues 1–19; the sequence is MNKTAIALLALLASSASLA. 3 disulfides stabilise this stretch: Cys44–Cys265, Cys187–Cys235, and Cys216–Cys223. Zn(2+) is bound by residues His110, His113, Asp120, Asp147, His150, and His211. The disordered stretch occupies residues 227-274; the sequence is PLPPPGDGCGAELQSWFEPPKPGTTKPEKKTPPPLPPSCQALLDEHVI.

This sequence belongs to the peptidase M74 family. As to quaternary structure, dimer. Zn(2+) serves as cofactor.

It is found in the periplasm. Functionally, murein endopeptidase that cleaves the D-alanyl-meso-2,6-diamino-pimelyl amide bond that connects peptidoglycan strands. Likely plays a role in the removal of murein from the sacculus. The sequence is that of Penicillin-insensitive murein endopeptidase from Escherichia coli O6:K15:H31 (strain 536 / UPEC).